Reading from the N-terminus, the 301-residue chain is MSTDKTYCGFIAIVGRPNVGKSTLLNKLLGQKISITSRKAQTTRHRIVGIHTEGPYQAIYVDTPGLHMEEKRAINRLMNKAASSSIGDVELVIFVVEGTRWTPDDEMVLNKLRDGKAPVILAVNKVDNVQEKADLLPHLQFLANQMNFLDIVPISAETGMNVDTIAGIVRKHLPEAIHHFPEDYITDRSQRFMASEIIREKLMRFLGAELPYSVTVEIERFVTNERGGYDINGLILVEREGQKKMVIGNKGAKIKTIGIEARKDMQEMFEAPVHLELWVKVKSGWADDERALRSLGYVDDL.

In terms of domain architecture, Era-type G spans Tyr-7 to Glu-175. The G1 stretch occupies residues Gly-15–Ser-22. GTP is bound at residue Gly-15–Ser-22. The segment at Gln-41–His-45 is G2. Positions Asp-62–Gly-65 are G3. GTP contacts are provided by residues Asp-62–Leu-66 and Asn-124–Asp-127. The tract at residues Asn-124 to Asp-127 is G4. Residues Ile-154 to Ala-156 form a G5 region. One can recognise a KH type-2 domain in the interval Leu-206 to Ser-283.

This sequence belongs to the TRAFAC class TrmE-Era-EngA-EngB-Septin-like GTPase superfamily. Era GTPase family. Monomer.

It is found in the cytoplasm. Its subcellular location is the cell inner membrane. Functionally, an essential GTPase that binds both GDP and GTP, with rapid nucleotide exchange. Plays a role in 16S rRNA processing and 30S ribosomal subunit biogenesis and possibly also in cell cycle regulation and energy metabolism. This is GTPase Era from Salmonella paratyphi B (strain ATCC BAA-1250 / SPB7).